The primary structure comprises 313 residues: Homoserine O-acetyltransferase (313 aa).

The active-site Acyl-thioester intermediate is the Cys-144. Lys-165 and Ser-194 together coordinate substrate. His-236 (proton acceptor) is an active-site residue. Residue Glu-238 is part of the active site. Arg-250 provides a ligand contact to substrate.

It belongs to the MetA family.

The protein localises to the cytoplasm. The enzyme catalyses L-homoserine + acetyl-CoA = O-acetyl-L-homoserine + CoA. The protein operates within amino-acid biosynthesis; L-methionine biosynthesis via de novo pathway; O-acetyl-L-homoserine from L-homoserine: step 1/1. Transfers an acetyl group from acetyl-CoA to L-homoserine, forming acetyl-L-homoserine. The protein is Homoserine O-acetyltransferase of Jannaschia sp. (strain CCS1).